Consider the following 309-residue polypeptide: Ferrochelatase (309 aa).

Residues histidine 185 and glutamate 262 each contribute to the Fe cation site.

The protein belongs to the ferrochelatase family.

It localises to the cytoplasm. It carries out the reaction heme b + 2 H(+) = protoporphyrin IX + Fe(2+). The protein operates within porphyrin-containing compound metabolism; protoheme biosynthesis; protoheme from protoporphyrin-IX: step 1/1. Its function is as follows. Catalyzes the ferrous insertion into protoporphyrin IX. The protein is Ferrochelatase of Campylobacter jejuni subsp. jejuni serotype O:23/36 (strain 81-176).